The following is a 2176-amino-acid chain: MHITKDIDTIFHRSLEGLTGDDHSPESRRDFPMSQSSGCRNGTDATVCHIFERIASQFPESVAAEDGGRNITYGELHYASNHLANHLSQIGIQSGQKIVIISNRSLEMIVALLGIMKSGACVVPIDFETWSQDRIQTTLETTQCRYAISTKCIEIPNQELILFQEGDLQHVLDNRRDQPASFSTRGFQLPSADDLAYTIFTSGTTSKPKGVMVPHSAIAHYVQQVSDEAPFNLNVQASSRVLLVFSVAFDACLGVVLSTICNGGTLILATSMNFATVATTCTILPLTPTILSTLRPGAEYDSIKSIFLGGESPSPNLLRPWLNGERRIFNCYGPTETTCTSLIKEVLPDEPNHLRYTVAGSSVVLLDGNLREVSEGEIAISGPGLAVGYFNNQALTAEKFIVYKGVRHYLTGDYGRKTSFGIDFLGRKDRVVKNRGFLINLEAEVEAVITNMKLANSAAALMHEGRLIMFVTPETIDVSSLRSRLLEIRDSFLVPDRIYAICSFPITSNGKVDLASLRQLLQEEKFTGVATHQSSPSSNLYVVLEGFSKVLGLPPSALCGSSSFLDNGGNSLSAVSLASHLRERGLSITVREIFESDTAQRICDTLSATILSTSDSEEADLESLRENVVRAGYPLTPRMEVAYMTAIQVNMIQSTIKMPSMNYIQLSITFDLSSGLFKPEVFRRAWEIIVQRHSILRATFIPALEATVIAADPTMDWREQLVDSSEWDSAVADAREKILCSMAPLDAEYLKPRSIFRLITEPKSRTEFIWTIHHSLVDGWSIAVIMRDLQCILSQEELPKVAQFTSVATVQKALAQRSLSRGKQQSWEEKMQNYIPAPRLRLPKPQGWARAARAERRQLLGVHRSQVQRFVQEYRVSDASIFLASWALVLSKYLSTDRVLFGVVLSGRNLPMAAVDQVVGPLLDTVPFPVNTTSTQSTAEFLRTIHGTLHEMNESPWEMKLQKSSMGPESLETLVALQYDLPDSTWNVDPKTWPSPQSMKHNETTELPLHILIDMQNGGDLEARYLYDCSHFEAAMIDQMLSHFSNMLKAILMHPTVELVKSSMMNQLEINDLLYSSPHMHDAYDGPQSLKQAFEEVVDTWPDAIAVESVSDSISYKELDHRSSAISNALLPLVGPGQIVGILSDGSVSWITAILAVLKAGAAYCPIDIALPEERIKVMLRESRCSLLLCTTEDLCELWANHSDLTCFSIGRLLSETLQTPERLPERCSPHDPAAVIFTSGSTGVPKGILLEHIGILSLLDFPNARLRSGPGRRNAQFLSLGFDCCVNEVFATLCYGATLVLRDPLDPVQHIKRVHATMCTPSFLATLDVNDFPNLELIALAGEPVPQKLVDTWGHNRVLLNVYSPSECTISTVYPQLYPGVQVTLGSPVPRQAIYILDKDLNPVPVGVPGEICISGIQVTRGYLNRPEETLVKFLPNPFQKGWRLYRSGDLGRLTNSHEIEYIGRIDNQVKVRGFRIELEEIESTIAALNPEVRQAAVIVVNDVLIGFVTPSSLDTLAIQAIISRHLPSYCRPSYFVALDNMPMSSNQKIDRKKLVSMKAERNHFTKVPIEGTTERIIQEIWKDLIPELGEVSALDNFLQIGGHSLLQARLTRQLGMALGNRIPLRIVIQNPVLRDLALAIDKHILDGGSEDISRGQPEQNTVLSHLEEEMYTVHMLSSEPSAWNIPYIARLTGPLNLAAFEASWNNIIRSNSILRARYQIKDGILTRSISTSISPVTRRYCKVTDDALLDIVNRAFDLANDQPIRLDLCLDRPTMSYVVLNMSHMIGDRSTMGEILRLLEEEYAQMILNDNFNLHEPLSESLPYSVWTAMRRKREVDAGLTHVLQKSLNPSLINPPLFGTFKQELACSAHRDKRIEGDLFSSLKNLRGRFKASGHQLAIAAIGLTLHRLSHREDFIIAAPIEDRTEAGTENMFGLFLDRLLIPLRFNLHSPHSADDLIHMVKSASEQAMANYIPFADLKNVLGMVGKSHSLCEIMVTYHASDLQGPNLTGVDALGIPVQPKGVKFPLMLEFSEFPESIGIDLAYDSHAIDNATMDEFEVQLMAAFRYLADETCSSTCTTYPPRLFPLIWSQKDTNTVAPISEDQEMIDLVREAMAECVGLNRCDISCSRSFFELGGSSVDCLRLQDRLIKSGVSVSLSSIIHLQTAELIAGAVE.

Positions 16–31 (EGLTGDDHSPESRRDF) are enriched in basic and acidic residues. Residues 16 to 38 (EGLTGDDHSPESRRDFPMSQSSG) form a disordered region. Residues 51-434 (FERIASQFPE…LGRKDRVVKN (384 aa)) form an adenylation 1 region. In terms of domain architecture, Carrier 1 spans 534-610 (SSPSSNLYVV…RICDTLSATI (77 aa)). O-(pantetheine 4'-phosphoryl)serine is present on Ser-571. Positions 643–1073 (YMTAIQVNMI…MMNQLEINDL (431 aa)) are condensation 1. An adenylation 2 region spans residues 1094–1474 (FEEVVDTWPD…GRIDNQVKVR (381 aa)). The Carrier 2 domain maps to 1570-1646 (PIEGTTERII…DLALAIDKHI (77 aa)). At Ser-1606 the chain carries O-(pantetheine 4'-phosphoryl)serine. A condensation 2 region spans residues 1661 to 2070 (QNTVLSHLEE…VQLMAAFRYL (410 aa)). The Carrier 3 domain occupies 2106–2176 (QEMIDLVREA…TAELIAGAVE (71 aa)). Ser-2140 is subject to O-(pantetheine 4'-phosphoryl)serine.

Belongs to the NRP synthetase family.

Its pathway is mycotoxin biosynthesis. In terms of biological role, nonribosomal peptide synthetase; part of the gene cluster that mediates the biosynthesis of sirodesmin PL, an epipolythiodioxopiperazine (ETP) characterized by a disulfide bridged cyclic dipeptide and that acts as a phytotoxin which is involved in the blackleg didease of canola. SirD catalyzes the O-prenylation of L-tyrosine (L-Tyr) in the presence of dimethylallyl diphosphate (DMAPP) to yield 4-O-dimethylallyl-L-Tyr, and therefore represents probably the first pathway-specific enzyme in the biosynthesis of sirodesmin PL. 4-O-dimethylallyl-L-Tyr, then undergoes condensation with L-Ser in a reaction catalyzed by the non-ribosomal peptide synthase sirP to form the diketopiperazine (DKP) backbone. Further bishydroxylation of the DKP performed by the cytochrome P450 monooxygenase sirC leads to the production of the intermediate phomamide. This step is essential to form the reactive thiol group required for toxicity of sirodesmin PL. The next steps of sirodesmin biosynthesis are not well understood yet, but some predictions could be made from intermediate compounds identification. Phomamide is converted into phomalizarine via oxidation, probably by sirT. Further oxidation, methylation (by sirM or sirN) and reduction steps convert phomalizarine to deacetyl sirodesmin. Finally, acetyltransferase sirH probably acetylates deacetyl sirodesmin to produce sirodesmin PL. This chain is Nonribosomal peptide synthetase sirP, found in Leptosphaeria maculans (Blackleg fungus).